The primary structure comprises 434 residues: Methylenetetrahydrofolate--tRNA-(uracil-5-)-methyltransferase TrmFO (434 aa).

10–15 contributes to the FAD binding site; it reads GAGLAG.

This sequence belongs to the MnmG family. TrmFO subfamily. It depends on FAD as a cofactor.

The protein localises to the cytoplasm. The catalysed reaction is uridine(54) in tRNA + (6R)-5,10-methylene-5,6,7,8-tetrahydrofolate + NADH + H(+) = 5-methyluridine(54) in tRNA + (6S)-5,6,7,8-tetrahydrofolate + NAD(+). The enzyme catalyses uridine(54) in tRNA + (6R)-5,10-methylene-5,6,7,8-tetrahydrofolate + NADPH + H(+) = 5-methyluridine(54) in tRNA + (6S)-5,6,7,8-tetrahydrofolate + NADP(+). Functionally, catalyzes the folate-dependent formation of 5-methyl-uridine at position 54 (M-5-U54) in all tRNAs. In Bacillus cereus (strain ATCC 10987 / NRS 248), this protein is Methylenetetrahydrofolate--tRNA-(uracil-5-)-methyltransferase TrmFO.